The sequence spans 326 residues: L-lactate dehydrogenase (326 aa).

39–60 (DVVTGMPEGKALDDSQATSIAD) contributes to the NAD(+) binding site. Positions 99, 131, and 162 each coordinate substrate. Asn131 provides a ligand contact to NAD(+). His186 acts as the Proton acceptor in catalysis.

Belongs to the LDH/MDH superfamily. LDH family. As to quaternary structure, homotetramer.

The catalysed reaction is (S)-lactate + NAD(+) = pyruvate + NADH + H(+). Its pathway is fermentation; pyruvate fermentation to lactate; (S)-lactate from pyruvate: step 1/1. The polypeptide is L-lactate dehydrogenase (Toxoplasma gondii).